The chain runs to 251 residues: tRNA (guanine-N(7)-)-methyltransferase (251 aa).

Residues glutamate 69, glutamate 94, aspartate 121, and aspartate 143 each coordinate S-adenosyl-L-methionine. The active site involves aspartate 143. The substrate site is built by lysine 147 and aspartate 179.

The protein belongs to the class I-like SAM-binding methyltransferase superfamily. TrmB family.

The catalysed reaction is guanosine(46) in tRNA + S-adenosyl-L-methionine = N(7)-methylguanosine(46) in tRNA + S-adenosyl-L-homocysteine. It functions in the pathway tRNA modification; N(7)-methylguanine-tRNA biosynthesis. Its function is as follows. Catalyzes the formation of N(7)-methylguanine at position 46 (m7G46) in tRNA. This is tRNA (guanine-N(7)-)-methyltransferase from Rhodopseudomonas palustris (strain BisB18).